We begin with the raw amino-acid sequence, 610 residues long: UvrABC system protein C (610 aa).

The 79-residue stretch at 16–94 (SAPGVYRMYD…IKQYMPKYNV (79 aa)) folds into the GIY-YIG domain. One can recognise a UVR domain in the interval 203 to 238 (KQVISQLVAKMETAAIDMEYERAAQYRDQITALRRV).

The protein belongs to the UvrC family. In terms of assembly, interacts with UvrB in an incision complex.

The protein resides in the cytoplasm. Its function is as follows. The UvrABC repair system catalyzes the recognition and processing of DNA lesions. UvrC both incises the 5' and 3' sides of the lesion. The N-terminal half is responsible for the 3' incision and the C-terminal half is responsible for the 5' incision. The chain is UvrABC system protein C from Shewanella frigidimarina (strain NCIMB 400).